Consider the following 374-residue polypeptide: S-adenosylmethionine synthase 2 (374 aa).

Glu-11 contacts Mg(2+). ATP is bound at residue His-17. K(+) is bound at residue Glu-45. L-methionine contacts are provided by Glu-58 and Gln-101. ATP-binding positions include 169 to 171 (DGK), 237 to 240 (SGRF), Asp-248, 254 to 255 (RK), Ala-271, Lys-275, and Lys-279. Asp-248 serves as a coordination point for L-methionine. An L-methionine-binding site is contributed by Lys-279.

The protein belongs to the AdoMet synthase family. Homotetramer. It depends on Mn(2+) as a cofactor. Mg(2+) serves as cofactor. The cofactor is Co(2+). K(+) is required as a cofactor. In terms of tissue distribution, expressed in vegetative and reproductive tissues.

Its subcellular location is the cytoplasm. It catalyses the reaction L-methionine + ATP + H2O = S-adenosyl-L-methionine + phosphate + diphosphate. Its pathway is amino-acid biosynthesis; S-adenosyl-L-methionine biosynthesis; S-adenosyl-L-methionine from L-methionine: step 1/1. Its function is as follows. Catalyzes the formation of S-adenosylmethionine from methionine and ATP. The reaction comprises two steps that are both catalyzed by the same enzyme: formation of S-adenosylmethionine (AdoMet) and triphosphate, and subsequent hydrolysis of the triphosphate. The protein is S-adenosylmethionine synthase 2 (SAMS2) of Pisum sativum (Garden pea).